Consider the following 222-residue polypeptide: MKFFIFTCLLAVALAKNTMEHVSSSEESIISQETYKQEKNMAINPSKENLCSTFCKEVVRNANEEEYSIGSSSEESAEVATEEVKITVDDKHYQKALNEINQFYQKFPQYLQYLYQGPIVLNPWDQVKRNAVPITPTLNREQLSTSEENSKKTVDMESTEVFTKKTKLTEEEKNRLNFLKKISQRYQKFALPQYLKTVYQHQKAMKPWIQPKTKVIPYVRYL.

The signal sequence occupies residues 1 to 15 (MKFFIFTCLLAVALA). Residues serine 23, serine 24, serine 25, serine 28, serine 46, serine 71, serine 72, serine 73, serine 76, serine 144, serine 146, serine 150, and serine 158 each carry the phosphoserine modification. The stretch at residues 76–140 (SAEVATEEVK…AVPITPTLNR (65 aa)) is a repeat. The stretch at residues 158–222 (STEVFTKKTK…TKVIPYVRYL (65 aa)) is a repeat.

The protein belongs to the alpha-casein family. Mammary gland specific. Secreted in milk.

It is found in the secreted. Functionally, important role in the capacity of milk to transport calcium phosphate. In terms of biological role, casocidin-I inhibits the growth of E.coli and S.carnosus. The polypeptide is Alpha-S2-casein (CSN1S2) (Bos taurus (Bovine)).